The primary structure comprises 281 residues: Pantothenate synthetase (281 aa).

Residue 30-37 (MGNLHQGH) coordinates ATP. The active-site Proton donor is histidine 37. Residue glutamine 61 participates in (R)-pantoate binding. Glutamine 61 is a binding site for beta-alanine. 149–152 (GNKD) is an ATP binding site. Glutamine 155 contributes to the (R)-pantoate binding site. ATP is bound by residues isoleucine 178 and 186–189 (MSSR).

This sequence belongs to the pantothenate synthetase family. Homodimer.

The protein localises to the cytoplasm. The catalysed reaction is (R)-pantoate + beta-alanine + ATP = (R)-pantothenate + AMP + diphosphate + H(+). It participates in cofactor biosynthesis; (R)-pantothenate biosynthesis; (R)-pantothenate from (R)-pantoate and beta-alanine: step 1/1. In terms of biological role, catalyzes the condensation of pantoate with beta-alanine in an ATP-dependent reaction via a pantoyl-adenylate intermediate. The polypeptide is Pantothenate synthetase (Shewanella baltica (strain OS195)).